Here is a 550-residue protein sequence, read N- to C-terminus: Arginine--tRNA ligase (550 aa).

Residues 130–140 carry the 'HIGH' region motif; the sequence is ANPTGPIHIGG.

It belongs to the class-I aminoacyl-tRNA synthetase family. In terms of assembly, monomer.

The protein localises to the cytoplasm. It carries out the reaction tRNA(Arg) + L-arginine + ATP = L-arginyl-tRNA(Arg) + AMP + diphosphate. This Mycolicibacterium smegmatis (strain ATCC 700084 / mc(2)155) (Mycobacterium smegmatis) protein is Arginine--tRNA ligase (argS).